The following is a 393-amino-acid chain: Carbamoyl phosphate synthase small chain (393 aa).

Positions 1–194 (MSKDTTTYQG…TYVIEAEGEE (194 aa)) are CPSase. The L-glutamine site is built by serine 61, glycine 245, and glycine 247. Residues 195–390 (RHTVVAYDLG…VELMDADAQK (196 aa)) enclose the Glutamine amidotransferase type-1 domain. Cysteine 273 functions as the Nucleophile in the catalytic mechanism. The L-glutamine site is built by phenylalanine 274, glutamine 277, asparagine 315, glycine 317, and phenylalanine 318. Catalysis depends on residues histidine 363 and glutamate 365.

The protein belongs to the CarA family. Composed of two chains; the small (or glutamine) chain promotes the hydrolysis of glutamine to ammonia, which is used by the large (or ammonia) chain to synthesize carbamoyl phosphate. Tetramer of heterodimers (alpha,beta)4.

The catalysed reaction is hydrogencarbonate + L-glutamine + 2 ATP + H2O = carbamoyl phosphate + L-glutamate + 2 ADP + phosphate + 2 H(+). It catalyses the reaction L-glutamine + H2O = L-glutamate + NH4(+). It functions in the pathway amino-acid biosynthesis; L-arginine biosynthesis; carbamoyl phosphate from bicarbonate: step 1/1. It participates in pyrimidine metabolism; UMP biosynthesis via de novo pathway; (S)-dihydroorotate from bicarbonate: step 1/3. Functionally, small subunit of the glutamine-dependent carbamoyl phosphate synthetase (CPSase). CPSase catalyzes the formation of carbamoyl phosphate from the ammonia moiety of glutamine, carbonate, and phosphate donated by ATP, constituting the first step of 2 biosynthetic pathways, one leading to arginine and/or urea and the other to pyrimidine nucleotides. The small subunit (glutamine amidotransferase) binds and cleaves glutamine to supply the large subunit with the substrate ammonia. The protein is Carbamoyl phosphate synthase small chain of Corynebacterium glutamicum (strain ATCC 13032 / DSM 20300 / JCM 1318 / BCRC 11384 / CCUG 27702 / LMG 3730 / NBRC 12168 / NCIMB 10025 / NRRL B-2784 / 534).